Consider the following 145-residue polypeptide: Transcription antitermination protein NusB (145 aa).

Belongs to the NusB family.

In terms of biological role, involved in transcription antitermination. Required for transcription of ribosomal RNA (rRNA) genes. Binds specifically to the boxA antiterminator sequence of the ribosomal RNA (rrn) operons. In Thiobacillus denitrificans (strain ATCC 25259 / T1), this protein is Transcription antitermination protein NusB.